The sequence spans 886 residues: Semaphorin-6B (886 aa).

The first 26 residues, 1 to 26 (MWTPRVPPPRPALSFFLLLLLGVTYG), serve as a signal peptide directing secretion. The Extracellular segment spans residues 27 to 605 (LFPEEPPPLS…VSVNLLVTSS (579 aa)). In terms of domain architecture, Sema spans 32 to 525 (PPPLSVAPRD…FPRCVVRVPV (494 aa)). Asparagine 75 carries N-linked (GlcNAc...) asparagine glycosylation. Cystine bridges form between cysteine 117–cysteine 127 and cysteine 145–cysteine 154. Asparagine 156 and asparagine 292 each carry an N-linked (GlcNAc...) asparagine glycan. Cystine bridges form between cysteine 268/cysteine 379 and cysteine 293/cysteine 338. N-linked (GlcNAc...) asparagine glycans are attached at residues asparagine 387, asparagine 442, and asparagine 463. Cystine bridges form between cysteine 487–cysteine 519, cysteine 528–cysteine 546, cysteine 534–cysteine 580, and cysteine 538–cysteine 554. Residues 606–626 (VAAFVVGAVVSGFSVGWFVGL) form a helical membrane-spanning segment. At 627-886 (RERRELARRK…TGERTAPPVP (260 aa)) the chain is on the cytoplasmic side. Disordered stretches follow at residues 655 to 677 (RLGE…PGGP), 697 to 731 (HGGP…AHAL), and 761 to 886 (EQPQ…PPVP). A compositionally biased stretch (gly residues) spans 662 to 674 (TGPGGRGGAGGGP). Arginine 667 bears the Omega-N-methylarginine mark. Over residues 707–718 (LLPTPEQTPLPQ) the composition is skewed to low complexity.

The protein belongs to the semaphorin family. In terms of assembly, homodimer. Binds specifically the SH3 domain of the protooncogene C-SRC. As to expression, in adulthood, it is expressed ubiquitously.

It is found in the cell membrane. Functions as a cell surface repellent for mossy fibers of developing neurons in the hippocampus where it plays a role in axon guidance. May function through the PLXNA4 receptor expressed by mossy cell axons. The sequence is that of Semaphorin-6B (Sema6b) from Mus musculus (Mouse).